Here is a 314-residue protein sequence, read N- to C-terminus: MAANINNAAAWLTEAKAHPFQVKEAPSYTPEENEILVKNHAVAINPVDGSLQSKAWWPMNYPTILGQDVAGEVVQVGPNVARFQPGDRVVGHAVGMATKRLQDNAFQAYTILQTNMASQLPSEISYEDAAVLPLGLSTAASGLFQDDVGSNAIQLGVAAGYEVFTTASPKNFDYVKELGASQVFDYHSATVAQDLVAALQGKTVAGAMDCIGFAATPLTVEVVSKSQGVKFVSTVKGGFQAPEGVTVKSVFGTTIKDNQVGKAIYEDYLPKALKAGSFIPAPVALVAGKGLESVQAAVDLQAQGTSAQKVVVSL.

This sequence belongs to the zinc-containing alcohol dehydrogenase family.

In terms of biological role, involved in osmoadaptation. This Emericella nidulans (strain FGSC A4 / ATCC 38163 / CBS 112.46 / NRRL 194 / M139) (Aspergillus nidulans) protein is Zinc-binding alcohol dehydrogenase domain-containing protein cipB (cipB).